The following is a 143-amino-acid chain: MKSYIAKPADVQRKWYLVDAEGKTLGRLATEIATVLRGKHKPTFTPHVDGGDFVVVVNAEKIVLSGKKLDQKYYRYHTGYVGGLKEISYRDMMDKKPEEVISHAVSGMLPKNKLRSRMMTRLRVFAGAEHTHAAQNPEVLNFK.

Belongs to the universal ribosomal protein uL13 family. In terms of assembly, part of the 50S ribosomal subunit.

Functionally, this protein is one of the early assembly proteins of the 50S ribosomal subunit, although it is not seen to bind rRNA by itself. It is important during the early stages of 50S assembly. This chain is Large ribosomal subunit protein uL13, found in Clostridioides difficile (strain 630) (Peptoclostridium difficile).